The chain runs to 80 residues: uncharacterized protein (80 aa).

This is an uncharacterized protein from Haemophilus influenzae (strain ATCC 51907 / DSM 11121 / KW20 / Rd).